The primary structure comprises 312 residues: Olfactory receptor 1D2 (312 aa).

Residues 1–25 (MDGGNQSEGSEFLLLGMSESPEQQR) lie on the Extracellular side of the membrane. N-linked (GlcNAc...) asparagine glycosylation is present at Asn5. A helical membrane pass occupies residues 26–49 (ILFWMFLSMYLVTVVGNVLIILAI). The Cytoplasmic portion of the chain corresponds to 50–57 (SSDSCLHT). The chain crosses the membrane as a helical span at residues 58 to 79 (PMYFFLANLSFTDLFFVTNTIP). At 80 to 100 (KMLVNLQSQNKAISYAGCLTQ) the chain is on the extracellular side. Cysteines 97 and 189 form a disulfide. A helical transmembrane segment spans residues 101–120 (LYFLVSLVALDNLILAVMAY). Residues 121–139 (DRYVAICCPLHYTTAMSPK) lie on the Cytoplasmic side of the membrane. A helical membrane pass occupies residues 140 to 158 (LCILLLSLCWVLSVLYGLI). Topologically, residues 159-196 (HTLLMTRVTFCGSRKIHYIFCEMYVLLRMACSNIQTNH) are extracellular. Residue Asn195 is glycosylated (N-linked (GlcNAc...) asparagine). A helical transmembrane segment spans residues 197–219 (TVLIATGCFIFLIPFGFVIISYV). Over 220 to 236 (LIIRAILRIPSLSKKYK) the chain is Cytoplasmic. A helical membrane pass occupies residues 237 to 259 (AFSTCASHLGAVSLFYGTLCMVY). The Extracellular portion of the chain corresponds to 260-271 (LKPLHTYSVKDS). A helical membrane pass occupies residues 272-291 (VATVMYAVVTPMMNPFIYSL). Topologically, residues 292–312 (RNKDMHGALGRLLDKHFKRLT) are cytoplasmic.

This sequence belongs to the G-protein coupled receptor 1 family.

Its subcellular location is the cell membrane. Odorant receptor. The sequence is that of Olfactory receptor 1D2 (OR1D2) from Pan troglodytes (Chimpanzee).